The chain runs to 414 residues: Ornithine aminotransferase (414 aa).

C154 and C163 are oxidised to a cystine. Position 262 is an N6-(pyridoxal phosphate)lysine (K262).

The protein belongs to the class-III pyridoxal-phosphate-dependent aminotransferase family. In terms of assembly, homodimer. Requires pyridoxal 5'-phosphate as cofactor. Post-translationally, the disulfide bond between Cys-154 and Cys-163 is reduced by TRX1 which increases OAT catalytic activity.

The protein localises to the cytoplasm. The catalysed reaction is a 2-oxocarboxylate + L-ornithine = L-glutamate 5-semialdehyde + an L-alpha-amino acid. It carries out the reaction L-ornithine + 2-oxoglutarate = L-glutamate 5-semialdehyde + L-glutamate. It participates in amino-acid biosynthesis; L-proline biosynthesis; L-glutamate 5-semialdehyde from L-ornithine: step 1/1. Unlike for mammalian OATs, activity is increased by TRX1-mediated reduction of the disulfide bond between Cys-154 and Cys-163. Binding to TRX1 may also induce conformational changes that facilitate substrate binding. Catalyzes the transamination of alpha-ketoglutarate with ornithine or N-acetylornithine and of glutamate-5-semialdehyde with glutamate and alanine. In Plasmodium chabaudi chabaudi, this protein is Ornithine aminotransferase.